Consider the following 148-residue polypeptide: Large ribosomal subunit protein bL9 (148 aa).

The protein belongs to the bacterial ribosomal protein bL9 family.

Functionally, binds to the 23S rRNA. The protein is Large ribosomal subunit protein bL9 of Bacillus cereus (strain B4264).